The sequence spans 256 residues: 5-keto-4-deoxy-D-glucarate aldolase (256 aa).

Catalysis depends on His50, which acts as the Proton acceptor. Substrate is bound at residue Gln151. Glu153 is a binding site for Mg(2+). The substrate site is built by Ser178 and Asp179. Residue Asp179 coordinates Mg(2+).

This sequence belongs to the HpcH/HpaI aldolase family. KDGluc aldolase subfamily. As to quaternary structure, homohexamer; trimer of dimers. It depends on Mg(2+) as a cofactor.

The catalysed reaction is 5-dehydro-4-deoxy-D-glucarate = 2-hydroxy-3-oxopropanoate + pyruvate. It carries out the reaction 2-dehydro-3-deoxy-D-glucarate = 2-hydroxy-3-oxopropanoate + pyruvate. It functions in the pathway carbohydrate acid metabolism; galactarate degradation; D-glycerate from galactarate: step 2/3. Functionally, catalyzes the reversible retro-aldol cleavage of both 5-keto-4-deoxy-D-glucarate and 2-keto-3-deoxy-D-glucarate to pyruvate and tartronic semialdehyde. This Shigella boydii serotype 4 (strain Sb227) protein is 5-keto-4-deoxy-D-glucarate aldolase.